The following is a 106-amino-acid chain: Replication protein A 14 kDa subunit B (106 aa).

Residue methionine 1 is modified to N-acetylmethionine.

The protein belongs to the replication factor A protein 3 family. In terms of assembly, component of the heterotrimeric canonical replication protein A complex (RPA).

The protein localises to the nucleus. Its function is as follows. As part of the replication protein A (RPA/RP-A), a single-stranded DNA-binding heterotrimeric complex, may play an essential role in DNA replication, recombination and repair. Binds and stabilizes single-stranded DNA intermediates, preventing complementary DNA reannealing and recruiting different proteins involved in DNA metabolism. The protein is Replication protein A 14 kDa subunit B (RPA3B) of Arabidopsis thaliana (Mouse-ear cress).